The primary structure comprises 86 residues: Cerebrin prohormone (86 aa).

The signal sequence occupies residues 1-27 (MFGYRSLLVLLVTLSLCLLLQSSHCSA). Positions 28–64 (VRTYGNDLDARARREIISLAARLIKLSMYGPEDDSFV) are excised as a propeptide. Ile83 is modified (isoleucine amide).

As to expression, expressed only in cerebral ganglion.

Its subcellular location is the secreted. In terms of biological role, may function as a hormone and may play a neuromodulatory role. The protein is Cerebrin prohormone (CBPH) of Aplysia californica (California sea hare).